Reading from the N-terminus, the 419-residue chain is 3-isopropylmalate dehydratase large subunit (419 aa).

Residues Cys300, Cys360, and Cys363 each contribute to the [4Fe-4S] cluster site.

This sequence belongs to the aconitase/IPM isomerase family. LeuC type 2 subfamily. Heterodimer of LeuC and LeuD. [4Fe-4S] cluster serves as cofactor.

It catalyses the reaction (2R,3S)-3-isopropylmalate = (2S)-2-isopropylmalate. Its pathway is amino-acid biosynthesis; L-leucine biosynthesis; L-leucine from 3-methyl-2-oxobutanoate: step 2/4. In terms of biological role, catalyzes the isomerization between 2-isopropylmalate and 3-isopropylmalate, via the formation of 2-isopropylmaleate. The sequence is that of 3-isopropylmalate dehydratase large subunit from Clostridium botulinum (strain Alaska E43 / Type E3).